The sequence spans 172 residues: uncharacterized protein (172 aa).

Positions 1-22 (MKLFQLLLLVLTISSFIISNNG) are cleaved as a signal peptide. Topologically, residues 23-140 (LVESHQGRMH…FSYENSSNET (118 aa)) are extracellular. Residues 27 to 69 (HQGRMHRGSGERHHRAGGNQQQPQPPSEQQVESSYNSNDDGSS) are disordered. Residues 29 to 42 (GRMHRGSGERHHRA) show a composition bias toward basic residues. Residues 53-69 (SEQQVESSYNSNDDGSS) show a composition bias toward low complexity. 2 N-linked (GlcNAc...) asparagine glycosylation sites follow: asparagine 135 and asparagine 138. Residues 141 to 161 (IVIYINPVTLVFTLVLLLTFI) form a helical membrane-spanning segment. Residues 162 to 172 (VLTITQSLRKY) are Cytoplasmic-facing.

It localises to the membrane. This is an uncharacterized protein from Dictyostelium discoideum (Social amoeba).